We begin with the raw amino-acid sequence, 450 residues long: MSHALPIAAIATAPGRGGIGVVRVSGPRLDAYIRALLGRDLTPRHAHYLPFLAEDGERIDEGIAIYFQGPHSYTGEDVLELQGHGGPAVLKRLLARCLEAGRSLGMRLAEPGEFTRRAFLNDRMDLAQAEAVADLIEASSEAAARGAMASLSGEFSQRINDLSGRIVHLRMLVEATLDFPEEEIDFLEKYQARPTLDGLRQDLDTLIAQARQGIILREGLHVVLAGQPNVGKSSLLNALAGDDIAIVTPIAGTTRDKVVQEIFIDGVPLHIVDTAGLRETEDTVESIGIARTWKEIERADLILHLQDATAPGDILDVDITARLPARTPVLAVFNKIDLLTSTAQLAENSIGISAKQGLGLEELRARLLQMAGWNPGAESPWLARERHLHALQAARDHLDIAAEHASHDDRVLDLFAEELRLSHESLSSITGKFTSDDLLGEIFSSFCIGK.

(6S)-5-formyl-5,6,7,8-tetrahydrofolate-binding residues include R23, E80, and R123. In terms of domain architecture, TrmE-type G spans 219–372 (GLHVVLAGQP…LRARLLQMAG (154 aa)). N229 provides a ligand contact to K(+). GTP-binding positions include 229–234 (NVGKSS), 248–254 (TPIAGTT), and 273–276 (DTAG). S233 lines the Mg(2+) pocket. Residues T248, I250, and T253 each coordinate K(+). Residue T254 participates in Mg(2+) binding. K450 lines the (6S)-5-formyl-5,6,7,8-tetrahydrofolate pocket.

This sequence belongs to the TRAFAC class TrmE-Era-EngA-EngB-Septin-like GTPase superfamily. TrmE GTPase family. In terms of assembly, homodimer. Heterotetramer of two MnmE and two MnmG subunits. Requires K(+) as cofactor.

The protein resides in the cytoplasm. Exhibits a very high intrinsic GTPase hydrolysis rate. Involved in the addition of a carboxymethylaminomethyl (cmnm) group at the wobble position (U34) of certain tRNAs, forming tRNA-cmnm(5)s(2)U34. The chain is tRNA modification GTPase MnmE from Bordetella avium (strain 197N).